The primary structure comprises 193 residues: ATP-dependent Clp protease proteolytic subunit (193 aa).

The active-site Nucleophile is the Ser98. Residue His123 is part of the active site.

The protein belongs to the peptidase S14 family. Fourteen ClpP subunits assemble into 2 heptameric rings which stack back to back to give a disk-like structure with a central cavity, resembling the structure of eukaryotic proteasomes.

It localises to the cytoplasm. It carries out the reaction Hydrolysis of proteins to small peptides in the presence of ATP and magnesium. alpha-casein is the usual test substrate. In the absence of ATP, only oligopeptides shorter than five residues are hydrolyzed (such as succinyl-Leu-Tyr-|-NHMec, and Leu-Tyr-Leu-|-Tyr-Trp, in which cleavage of the -Tyr-|-Leu- and -Tyr-|-Trp bonds also occurs).. Its function is as follows. Cleaves peptides in various proteins in a process that requires ATP hydrolysis. Has a chymotrypsin-like activity. Plays a major role in the degradation of misfolded proteins. This is ATP-dependent Clp protease proteolytic subunit from Glaesserella parasuis serovar 5 (strain SH0165) (Haemophilus parasuis).